The primary structure comprises 404 residues: Protrudin (404 aa).

The segment at 1 to 25 is disordered; sequence MQSSDRDLSGPEASPSVMPEVLSEC. Residues 1–63 lie on the Cytoplasmic side of the membrane; that stretch reads MQSSDRDLSG…LKDAGDGVRY (63 aa). The segment at 1–92 is sufficient for homooligomerization; that stretch reads MQSSDRDLSG…LFLTLNEGAW (92 aa). A sufficient for localization to endoplasmic reticulum tubular network and for interactions with REEP1, REEP5, ATL1, ATL2, ATL3 and SPAST region spans residues 1 to 205; sequence MQSSDRDLSG…LYLLPLCWVL (205 aa). Positions 51-64 are necessary for interaction with RAB11A and function in neurite outgrowth; it reads LEPLKDAGDGVRYL. The helical transmembrane segment at 64-85 threads the bilayer; sequence LLRWQMPLCSLLTCLGLNILFL. The Lumenal segment spans residues 86–90; it reads TLNEG. The chain crosses the membrane as a helical span at residues 91-109; it reads AWYSVGALIISVPALLGYL. At 110–187 the chain is on the cytoplasmic side; sequence QEVCRAQLPE…NPVVSSQFYG (78 aa). An intramembrane region (helical) is located at residues 188 to 208; it reads ALLGMVCMLYLLPLCWVLALL. Over 209 to 404 the chain is Cytoplasmic; the sequence is NSTLFLGNGE…CASCNQTLSK (196 aa). The tract at residues 259–299 is disordered; that stretch reads DSTPAPTPTEDLTPGSVEEAEEAEPDEEFKDAIEEDDEGTP. A necessary for interaction with KIF5A region spans residues 271-354; that stretch reads TPGSVEEAEE…GCAATFSVLK (84 aa). Over residues 276–299 the composition is skewed to acidic residues; that stretch reads EEAEEAEPDEEFKDAIEEDDEGTP. Positions 286 to 292 are necessary for interaction with VAPA; the sequence is EFKDAIE. The FYVE-type zinc finger occupies 337–403; the sequence is TNNFGNCAGC…VCASCNQTLS (67 aa). Zn(2+)-binding residues include cysteine 343, cysteine 346, cysteine 359, cysteine 362, cysteine 367, cysteine 370, cysteine 395, and cysteine 398.

In terms of assembly, can form homooligomers (monomers, dimers and tetramers). Interacts with FKBP8; may negatively regulate ZFYVE27 phosphorylation. Interacts with VAPA (via MSP domain); may regulate ZFYVE27 retention in the endoplasmic reticulum and its function in cell projections formation. Interacts with VAPB (via MSP domain). Interacts with RAB11A (GDP-bound form); regulates RAB11A. Interacts with RAB11B (GDP-bound form), REEP1, REEP5, ATL1, ATL2, ATL3, SPAST, SURF4, KIF5A, KIF5B, KIF5C and RTN3. Post-translationally, phosphorylated. Phosphorylation is induced by NGF through the MAPK/ERK pathway and modulates interaction with RAB11A.

Its subcellular location is the recycling endosome membrane. It is found in the endoplasmic reticulum membrane. The protein localises to the cell projection. The protein resides in the growth cone membrane. Functionally, key regulator of RAB11-dependent vesicular trafficking during neurite extension through polarized membrane transport. Promotes axonal elongation and contributes to the establishment of neuronal cell polarity. Involved in nerve growth factor-induced neurite formation in VAPA-dependent manner. Contributes to both the formation and stabilization of the tubular ER network. Involved in ER morphogenesis by regulating the sheet-to-tubule balance and possibly the density of tubule interconnections. Acts as an adapter protein that facilitates the interaction of KIF5A with VAPA, VAPB, SURF4, RAB11A, RAB11B and RTN3 and the ZFYVE27-KIF5A complex contributes to the transport of these proteins in neurons. Can induce formation of neurite-like membrane protrusions in non-neuronal cells in a KIF5A/B-dependent manner. This chain is Protrudin (Zfyve27), found in Rattus norvegicus (Rat).